A 417-amino-acid chain; its full sequence is Gamma-glutamyl phosphate reductase (417 aa).

The protein belongs to the gamma-glutamyl phosphate reductase family.

Its subcellular location is the cytoplasm. It carries out the reaction L-glutamate 5-semialdehyde + phosphate + NADP(+) = L-glutamyl 5-phosphate + NADPH + H(+). It functions in the pathway amino-acid biosynthesis; L-proline biosynthesis; L-glutamate 5-semialdehyde from L-glutamate: step 2/2. Catalyzes the NADPH-dependent reduction of L-glutamate 5-phosphate into L-glutamate 5-semialdehyde and phosphate. The product spontaneously undergoes cyclization to form 1-pyrroline-5-carboxylate. This is Gamma-glutamyl phosphate reductase from Klebsiella pneumoniae (strain 342).